Consider the following 1237-residue polypeptide: Anion exchange protein 2 (1237 aa).

A disordered region spans residues 1 to 238 (MSSAPRRPAS…YNLQERRRIG (238 aa)). The Cytoplasmic segment spans residues 1-703 (MSSAPRRPAS…SDFRDALDPQ (703 aa)). 2 stretches are compositionally biased toward basic and acidic residues: residues 38 to 48 (LRTLGVERFEE) and 57 to 74 (GGEEPGRSYGEEDFEYHR). Basic residues-rich tracts occupy residues 75–84 (QSSHHIHHPL) and 93–109 (RRRKTPQGPGRKPRRRP). 6 positions are modified to phosphoserine: S112, S131, S144, S170, S172, and S239. A compositionally biased stretch (acidic residues) spans 119-132 (TIEEGEEDEEEASE). T253 carries the phosphothreonine modification. The residue at position 270 (K270) is an N6-methyllysine. Residues 285–316 (VRKNAKGSTQAAREGREPGPTPRARPRAPHKP) are disordered. S439 bears the Phosphoserine mark. The segment at 445-466 (SLLGHHHAQGTESDPHVTEPLI) is disordered. 4 helical membrane-spanning segments follow: residues 704 to 727 (CLAAVIFIYFAALSPAITFGGLLG), 733 to 770 (LIGVSELIMSTALQGVVFCLLGAQPLLVIGFSGPLLVF), 790 to 812 (VWIGFWLVFLALLMVALEGSFLV), and 822 to 843 (IFAFLISLIFIYETFYKLIKIF). Residues 704 to 1237 (CLAAVIFIYF…DEYNEMPMPV (534 aa)) form a membrane (anion exchange) region. Topologically, residues 844–896 (QEHPLHGCSGSNDSEAGSSSSSNMTWATTILVPDNSSASGQSGQEKPRGQPNT) are extracellular. N-linked (GlcNAc...) asparagine glycosylation is found at N855, N866, and N878. Residues 897 to 914 (ALLSLVLMAGTFFIAFFL) form a helical membrane-spanning segment. The Cytoplasmic segment spans residues 915–929 (RKFKNSRFFPGRIRR). 5 helical membrane-spanning segments follow: residues 930–950 (VIGDFGVPIAILIMVLVDYSI), 984–1006 (PFPVWMMVASLLPAVLVFILIFM), 1032–1053 (LLLIVAMGGICALFGLPWLAAA), 1087–1132 (VTGL…IQFY), and 1159–1195 (MHLFTALQLLCLALLWAVMSTAASLAFPFILILTVPL). The S-palmitoyl cysteine moiety is linked to residue C1169.

This sequence belongs to the anion exchanger (TC 2.A.31) family. In terms of tissue distribution, expressed in the choroid plexus epithelium (at protein level). Expressed in the parotid gland and sublingual salivary gland acinar cells (at protein level). Widely expressed at similar levels in all tissues examined. Expressed in the testis. As to expression, predominantly expressed in stomach although they are also detected at lower levels in other tissues. Expressed in the testis. In terms of tissue distribution, stomach-specific. Expressed at slightly higher levels in lung and stomach than in other tissues.

Its subcellular location is the apical cell membrane. It is found in the basolateral cell membrane. The enzyme catalyses hydrogencarbonate(in) + chloride(out) = hydrogencarbonate(out) + chloride(in). With respect to regulation, inhibited by 4,4'-diisothiocyanatostilbene-2,2'-disulfonic acid (DIDS) and acetazolamide. Muscarinic receptor stimulation enhances activity through a Ca(2+)-dependent mechanism. Functionally, sodium-independent anion exchanger which mediates the electroneutral exchange of chloride for bicarbonate ions across the cell membrane. Plays an important role in osteoclast differentiation and function. Regulates bone resorption and calpain-dependent actin cytoskeleton organization in osteoclasts via anion exchange-dependent control of pH. Essential for intracellular pH regulation in CD8(+) T-cells upon CD3 stimulation, modulating CD8(+) T-cell responses. Plays a critical role in male fertility and spermiogenesis. The polypeptide is Anion exchange protein 2 (Slc4a2) (Mus musculus (Mouse)).